We begin with the raw amino-acid sequence, 199 residues long: Sulfocyanin (199 aa).

The chain crosses the membrane as a helical; Signal-anchor for type II membrane protein span at residues 7–27; that stretch reads VLPVVVGILVVIIAVAVGVYV. One can recognise a Plastocyanin-like domain in the interval 79-188; that stretch reads NFNGTSSGSL…SGMWAVLVAS (110 aa). Residues His110, Cys171, His176, and Met181 each contribute to the Cu cation site.

This sequence belongs to the multicopper oxidase family.

It is found in the cell membrane. Functionally, the 4 redox proteins SoxE, SoxF, SoxG and SoxH probably form part of a membrane respiratory complex together with SoxM, a catalytic subunit of cytochrome oxidase. The chain is Sulfocyanin (soxE) from Sulfolobus acidocaldarius (strain ATCC 33909 / DSM 639 / JCM 8929 / NBRC 15157 / NCIMB 11770).